The following is a 307-amino-acid chain: Taste receptor type 2 member 10 (307 aa).

At 1–6 (MLSVVE) the chain is on the extracellular side. Residues 7–27 (GILILVVISESVFGVLGNGFI) form a helical membrane-spanning segment. At 28 to 42 (GLVNCIDCAKNKLST) the chain is on the cytoplasmic side. Residues 43–63 (IGFILTGLAISRIFLIWIIIT) form a helical membrane-spanning segment. The Extracellular segment spans residues 64–100 (DGFIQIFSPDVYASGNLIEYISYFWVITNQSSIWFAT). The N-linked (GlcNAc...) asparagine glycan is linked to N92. A helical transmembrane segment spans residues 101–121 (SLSIFYFLKIANFSNYIFLWL). Over 122–126 (KSRIN) the chain is Cytoplasmic. Residues 127 to 147 (RVLPLLMGFLLISCLLNFAYI) form a helical membrane-spanning segment. The Extracellular portion of the chain corresponds to 148 to 179 (VKILNDLKMKNDTVWRLNMYKSEYFIKQLLLN). N-linked (GlcNAc...) asparagine glycosylation occurs at N158. A helical transmembrane segment spans residues 180 to 200 (LGVIFFFTLSLITSVLLIISL). Topologically, residues 201 to 227 (WRHNRQMQSNVTGLRDSITEAHVKAMK) are cytoplasmic. A helical transmembrane segment spans residues 228–248 (VLISFIILFILYFIGIAIEIS). Topologically, residues 249 to 257 (YFTVPENKL) are extracellular. The chain crosses the membrane as a helical span at residues 258–278 (LLIFGMTTTAIYPWGHSFILI). The Cytoplasmic segment spans residues 279-307 (LGNSKLKQASLRVLQQLKCCEERKNLRAT).

It belongs to the G-protein coupled receptor T2R family.

It is found in the membrane. Functionally, receptor that may play a role in the perception of bitterness and is gustducin-linked. May play a role in sensing the chemical composition of the gastrointestinal content. The activity of this receptor may stimulate alpha gustducin, mediate PLC-beta-2 activation and lead to the gating of TRPM5. The polypeptide is Taste receptor type 2 member 10 (TAS2R10) (Papio hamadryas (Hamadryas baboon)).